The sequence spans 260 residues: Universal stress protein PHOS34 (260 aa).

A chloroplast-targeting transit peptide spans 1–33 (MNPDSDYPHLPNIKIHHPSSPRHSHHHSSSTPS). The segment at 1–42 (MNPDSDYPHLPNIKIHHPSSPRHSHHHSSSTPSAATPTPTAG) is disordered. Over residues 14-28 (KIHHPSSPRHSHHHS) the composition is skewed to basic residues. Proline 18 lines the ATP pocket. Serine 20 carries the post-translational modification Phosphoserine; by MAPK3 and MAPK6. A compositionally biased stretch (low complexity) spans 29-41 (SSTPSAATPTPTA). ATP is bound at residue valine 80. The interval 92–118 (GPLPLQTPPPPSAATDPGAQPKPSQED) is disordered. Residues 170 to 179 (GSRGFGAEKR) and 187 to 189 (SVS) each bind ATP. Positions 209-260 (RDGPAPPGNVGATREAIVTVKSRRDDDDDDDEDHEAKIAAAASDHHEHIKDE) are disordered. Serine 230 is modified (phosphoserine). The segment covering 251–260 (SDHHEHIKDE) has biased composition (basic and acidic residues).

The protein belongs to the universal stress protein A family. Phosphorylated by MAPK3 and MAPK6 after pathogenic elicitation (e.g. bacterial flg22, Phytophthora infestans zoospores and xylanase).

The protein localises to the plastid. It is found in the chloroplast. The sequence is that of Universal stress protein PHOS34 from Arabidopsis thaliana (Mouse-ear cress).